The primary structure comprises 89 residues: Putative membrane protein insertion efficiency factor (89 aa).

A disordered region spans residues Val-68–Leu-89. Residues Asn-77–Leu-89 show a composition bias toward basic and acidic residues.

This sequence belongs to the UPF0161 family.

It is found in the cell inner membrane. Functionally, could be involved in insertion of integral membrane proteins into the membrane. This chain is Putative membrane protein insertion efficiency factor, found in Burkholderia mallei (strain SAVP1).